Reading from the N-terminus, the 467-residue chain is Asparagine--tRNA ligase (467 aa).

This sequence belongs to the class-II aminoacyl-tRNA synthetase family. In terms of assembly, homodimer.

It is found in the cytoplasm. The enzyme catalyses tRNA(Asn) + L-asparagine + ATP = L-asparaginyl-tRNA(Asn) + AMP + diphosphate + H(+). This is Asparagine--tRNA ligase from Protochlamydia amoebophila (strain UWE25).